Here is a 585-residue protein sequence, read N- to C-terminus: Arginine--tRNA ligase (585 aa).

The 'HIGH' region motif lies at 131–141 (ANPTGPMHVGH).

This sequence belongs to the class-I aminoacyl-tRNA synthetase family. As to quaternary structure, monomer.

It is found in the cytoplasm. It carries out the reaction tRNA(Arg) + L-arginine + ATP = L-arginyl-tRNA(Arg) + AMP + diphosphate. This chain is Arginine--tRNA ligase, found in Rhizobium leguminosarum bv. trifolii (strain WSM2304).